Reading from the N-terminus, the 345-residue chain is NADH-quinone oxidoreductase subunit H (345 aa).

Transmembrane regions (helical) follow at residues 15 to 35 (MLLQGLAVIAFVMGSLIFMVY), 82 to 102 (FVYFLAPFLSMMLALFAFVVI), 115 to 135 (VGILFIFAASSLEVYGVIMGG), 161 to 181 (LGLIIIGIIISTGSMNLTAIV), 190 to 210 (LLNWYWLPHLPMVVLFFVSAL), 240 to 262 (YLLFMAGEYIAMYLMCALLSLLF), 278 to 298 (WWMVIKMWFWFYMFAMVKAIV), and 309 to 329 (IGWKVFLPLSLGWVVLVAILA).

The protein belongs to the complex I subunit 1 family. In terms of assembly, NDH-1 is composed of at least 14 different subunits, Nqo1 to Nqo14. The complex has a L-shaped structure, with the hydrophobic arm (subunits Nqo7, Nqo8, Nqo10 to Nqo14) embedded in the inner membrane and the hydrophilic peripheral arm (subunits Nqo1 to Nqo6, Nqo9) protruding into the bacterial cytoplasm. The hydrophilic domain contains all the redox centers. NADH-quinone oxidoreductase forms a supercomplex with ubiquinol-cytochrome c reductase complex (complex III or cytochrome b-c1 complex) and cytochrome c oxidase (complex IV), which stabilizes the NADH-quinone oxidoreductase complex.

It localises to the cell inner membrane. The catalysed reaction is a quinone + NADH + 5 H(+)(in) = a quinol + NAD(+) + 4 H(+)(out). Its function is as follows. NDH-1 shuttles electrons from NADH, via FMN and iron-sulfur (Fe-S) centers, to quinones in the respiratory chain. The immediate electron acceptor for the enzyme in this species is believed to be ubiquinone. Couples the redox reaction to proton translocation (for every two electrons transferred, four hydrogen ions are translocated across the cytoplasmic membrane), and thus conserves the redox energy in a proton gradient. This subunit may bind ubiquinone. This is NADH-quinone oxidoreductase subunit H from Paracoccus denitrificans (strain Pd 1222).